The primary structure comprises 57 residues: Neurotoxin Oh9-1 (57 aa).

4 cysteine pairs are disulfide-bonded: Cys-3–Cys-19, Cys-12–Cys-37, Cys-41–Cys-49, and Cys-50–Cys-55.

The protein belongs to the three-finger toxin family. Short-chain subfamily. Expressed by the venom gland.

It is found in the secreted. This toxin binds and inhibits rat muscle adult alpha-1-beta-1-delta-epsilon/CHRNA1-CHRNB1-CHRND-CHRNE (IC(50)=3.1 uM) and fetal alpha-1-beta-1-gamma-delta/CHRNA1-CHRNB1-CHRNG-CHRND (IC(50)=5.6 uM) nicotinic acetylcholine receptors (nAChR). Shows a very low inhibition on rat neuronal alpha-3-beta-2/CHRNA3-CHRNB2 nAChR (IC(50)=50.2 uM) nAChR. Binds to the acetylcholine-binding pocket and acts as a competitive antagonist. Does not inhibit human glycine receptor (homopentamer composed of alpha-1 subunits, GLRA1), but seems to potentiate it (about 2-fold increased activity). This chain is Neurotoxin Oh9-1, found in Ophiophagus hannah (King cobra).